The following is a 42-amino-acid chain: Photosystem I reaction center subunit IX (42 aa).

Residues 7-27 (YLSTAPVLATLWFGFLAGLLI) traverse the membrane as a helical segment.

This sequence belongs to the PsaJ family.

Its subcellular location is the plastid. The protein localises to the chloroplast thylakoid membrane. May help in the organization of the PsaE and PsaF subunits. The protein is Photosystem I reaction center subunit IX of Anthoceros angustus (Hornwort).